The chain runs to 122 residues: Large ribosomal subunit protein uL14 (122 aa).

Belongs to the universal ribosomal protein uL14 family. As to quaternary structure, part of the 50S ribosomal subunit. Forms a cluster with proteins L3 and L19. In the 70S ribosome, L14 and L19 interact and together make contacts with the 16S rRNA in bridges B5 and B8.

Functionally, binds to 23S rRNA. Forms part of two intersubunit bridges in the 70S ribosome. The chain is Large ribosomal subunit protein uL14 from Beutenbergia cavernae (strain ATCC BAA-8 / DSM 12333 / CCUG 43141 / JCM 11478 / NBRC 16432 / NCIMB 13614 / HKI 0122).